Reading from the N-terminus, the 621-residue chain is C4-dicarboxylate transport sensor protein DctB (621 aa).

The Cytoplasmic segment spans residues Met1–Ser26. Residues Trp27 to Ala45 form a helical membrane-spanning segment. The Periplasmic portion of the chain corresponds to Arg46–Gln320. A helical transmembrane segment spans residues Leu321 to Leu338. Topologically, residues Arg339–Ala621 are cytoplasmic. The Histidine kinase domain maps to Gly412–Ala621. The residue at position 415 (His415) is a Phosphohistidine; by autocatalysis.

Post-translationally, autophosphorylated.

It is found in the cell inner membrane. The catalysed reaction is ATP + protein L-histidine = ADP + protein N-phospho-L-histidine.. In terms of biological role, member of the two-component regulatory system DctB/DctD involved in the transport of C4-dicarboxylates. DctB functions as a membrane-associated protein kinase that phosphorylates DctD in response to environmental signals. This Rhizobium meliloti (strain 1021) (Ensifer meliloti) protein is C4-dicarboxylate transport sensor protein DctB (dctB).